Here is a 233-residue protein sequence, read N- to C-terminus: MAKQTKKQKALVTKLGDNQKLYAVDEAIALLKDLKSAKFDESLEVSLNLGVDPRHADQMVRGMVTLPSGTGKDVKVAVFARGDKAEAALAAGADKVGAEDLLEDMQAGNLDYGRVIATPDMMGIVGRLGKVLGPKGLMPNPKLGTVTPNVAEAVKAAKGGQIEFRVEKAGIIHGGIGKLSFSDEALRANFDAFVDAIVKAKPAGAKGKYLRKVGLSSSMGPGLKIDLAQVNGG.

Belongs to the universal ribosomal protein uL1 family. Part of the 50S ribosomal subunit.

Binds directly to 23S rRNA. The L1 stalk is quite mobile in the ribosome, and is involved in E site tRNA release. In terms of biological role, protein L1 is also a translational repressor protein, it controls the translation of the L11 operon by binding to its mRNA. The sequence is that of Large ribosomal subunit protein uL1 from Novosphingobium aromaticivorans (strain ATCC 700278 / DSM 12444 / CCUG 56034 / CIP 105152 / NBRC 16084 / F199).